Reading from the N-terminus, the 267-residue chain is MATGEPRDRGGYYFRFLPQRTFSSLSAREITNRLRQWSMLGRIQAQAFGFDQTFQPYQKDDFVTAFFKDPNVIPHLQLLAESSGQWTTLGTEVKRIEAINVPCTQLSMSFFQRLYDENIVRESGHIVKCLDSFCDPFLISDELRKVLLMEDSEKYEVFSPVEREEFLFCLFKHLCLGGSLCQYEDVLKPYLETAKLIYKDLVSVRKHPRTKEIQITSSVFKVKAYDSLGVCYPSPKEHEQTFSYFVVDPIKRHVNVLYHCYGVGEMA.

The protein belongs to the CFAP300 family. In terms of assembly, interacts with DNAAF2.

It localises to the cytoplasm. It is found in the cytoskeleton. The protein resides in the cilium axoneme. In terms of biological role, cilium- and flagellum-specific protein that plays a role in axonemal structure organization and motility. May play a role in outer and inner dynein arm assembly. This is Cilia- and flagella-associated protein 300 from Rattus norvegicus (Rat).